Reading from the N-terminus, the 401-residue chain is Flagellin D (401 aa).

Belongs to the bacterial flagellin family.

The protein localises to the secreted. It is found in the bacterial flagellum. Functionally, flagellin is the subunit protein which polymerizes to form the filaments of bacterial flagella. This chain is Flagellin D (flaD), found in Rhizobium meliloti (strain 1021) (Ensifer meliloti).